Reading from the N-terminus, the 1368-residue chain is Indole-3-acetaldehyde oxidase (1368 aa).

A 2Fe-2S ferredoxin-type domain is found at 19–108 (TSLVFAINGQ…GCSITTSDGL (90 aa)). [2Fe-2S] cluster is bound by residues cysteine 60, cysteine 65, and cysteine 68. One can recognise an FAD-binding PCMH-type domain in the interval 246-427 (LHSRKYRWSS…LSLEIPSWHS (182 aa)).

This sequence belongs to the xanthine dehydrogenase family. As to quaternary structure, aldehyde oxidases (AO) are homodimers and heterodimers of AO subunits. AO-alpha is an AAO1 homodimer; AO-beta is an AAO1-AAO2 heterodimer. The cofactor is [2Fe-2S] cluster. FAD is required as a cofactor. Mo-molybdopterin serves as cofactor. As to expression, predominantly expressed in roots, seedlings, mature siliques and seeds, and to lower extent in stems and rosettes. In seedlings, mostly expressed in lower part of hypocotyls and roots.

It is found in the cytoplasm. The enzyme catalyses indole-3-acetaldehyde + O2 + H2O = (indol-3-yl)acetate + H2O2 + H(+). Its activity is regulated as follows. Strongly inhibited by iodoacetate and potassium cyanide (KCN). Weakly inhibited by 2-mercaptoethanol, dithiothreitol (DTT), menadione, estradiol, 4'-(9-acridinylamino)methanesulfon-m-anisidine (mAMSA), allopurinol and tritonX-100. Not affected by p-chloromercuribenzoate. In higher plants aldehyde oxidases (AO) appear to be homo- and heterodimeric assemblies of AO subunits with probably different physiological functions. AO-alpha may be involved in the biosynthesis of auxin, and in biosynthesis of abscisic acid (ABA) in seeds. In vitro, AO-alpha uses heptaldehyde, protocatechualdehyde, benzaldehyde, indole-3-aldehyde (IAld), indole-3-acetaldehyde (IAAld), cinnamaldehyde and citral as substrates; AO-beta uses IAAld, IAld and naphtaldehyde as substrates. This chain is Indole-3-acetaldehyde oxidase (AAO1), found in Arabidopsis thaliana (Mouse-ear cress).